The chain runs to 182 residues: Large ribosomal subunit protein bL25 (182 aa).

Belongs to the bacterial ribosomal protein bL25 family. CTC subfamily. Part of the 50S ribosomal subunit; part of the 5S rRNA/L5/L18/L25 subcomplex. Contacts the 5S rRNA. Binds to the 5S rRNA independently of L5 and L18.

Functionally, this is one of the proteins that binds to the 5S RNA in the ribosome where it forms part of the central protuberance. The chain is Large ribosomal subunit protein bL25 from Borreliella afzelii (strain PKo) (Borrelia afzelii).